The chain runs to 110 residues: Large ribosomal subunit protein uL22 (110 aa).

It belongs to the universal ribosomal protein uL22 family. Part of the 50S ribosomal subunit.

This protein binds specifically to 23S rRNA; its binding is stimulated by other ribosomal proteins, e.g. L4, L17, and L20. It is important during the early stages of 50S assembly. It makes multiple contacts with different domains of the 23S rRNA in the assembled 50S subunit and ribosome. Functionally, the globular domain of the protein is located near the polypeptide exit tunnel on the outside of the subunit, while an extended beta-hairpin is found that lines the wall of the exit tunnel in the center of the 70S ribosome. The polypeptide is Large ribosomal subunit protein uL22 (Shewanella halifaxensis (strain HAW-EB4)).